Reading from the N-terminus, the 536-residue chain is Apoptosis inhibitor 5 homolog (536 aa).

Residues 462-536 form a disordered region; that stretch reads ITFGEKAAAN…GYRNRRFNKY (75 aa). Residues 472-487 show a composition bias toward basic and acidic residues; that stretch reads GKDKDQEPEKKSRPSN. Residues 498-507 are compositionally biased toward polar residues; sequence KYSNKVNQSY. Residues 516-528 show a composition bias toward gly residues; sequence RGGGGGGGSGGGY.

This sequence belongs to the API5 family.

The protein localises to the nucleus. Functionally, antiapoptotic factor. Also known to efficiently suppress E2F1-induced apoptosis. In Drosophila melanogaster (Fruit fly), this protein is Apoptosis inhibitor 5 homolog.